Consider the following 176-residue polypeptide: Large ribosomal subunit protein uL6 (176 aa).

A compositionally biased stretch (basic and acidic residues) spans 151–170 (RPPEPYKGKGVRYADEQVRR). Residues 151–176 (RPPEPYKGKGVRYADEQVRRKEAKKK) form a disordered region.

It belongs to the universal ribosomal protein uL6 family. As to quaternary structure, part of the 50S ribosomal subunit.

Its function is as follows. This protein binds to the 23S rRNA, and is important in its secondary structure. It is located near the subunit interface in the base of the L7/L12 stalk, and near the tRNA binding site of the peptidyltransferase center. In Shewanella piezotolerans (strain WP3 / JCM 13877), this protein is Large ribosomal subunit protein uL6.